The chain runs to 417 residues: UDP-N-acetylglucosamine 1-carboxyvinyltransferase (417 aa).

Phosphoenolpyruvate is bound at residue 22–23 (KN). Arginine 93 contributes to the UDP-N-acetyl-alpha-D-glucosamine binding site. Cysteine 117 acts as the Proton donor in catalysis. Position 117 is a 2-(S-cysteinyl)pyruvic acid O-phosphothioketal (cysteine 117). Residues 122–126 (RPVDQ), aspartate 305, and isoleucine 327 contribute to the UDP-N-acetyl-alpha-D-glucosamine site.

This sequence belongs to the EPSP synthase family. MurA subfamily.

It is found in the cytoplasm. The enzyme catalyses phosphoenolpyruvate + UDP-N-acetyl-alpha-D-glucosamine = UDP-N-acetyl-3-O-(1-carboxyvinyl)-alpha-D-glucosamine + phosphate. Its pathway is cell wall biogenesis; peptidoglycan biosynthesis. Cell wall formation. Adds enolpyruvyl to UDP-N-acetylglucosamine. The chain is UDP-N-acetylglucosamine 1-carboxyvinyltransferase from Nitrosomonas eutropha (strain DSM 101675 / C91 / Nm57).